The primary structure comprises 622 residues: WD repeat-containing protein 46 (622 aa).

Residues 1–135 are disordered; it reads METAPKPGRG…KTQSKLEKAE (135 aa). Serine 41 is subject to Phosphoserine. Over residues 106-118 the composition is skewed to basic and acidic residues; sequence EEARKFCRIDKSK. WD repeat units lie at residues 192–233, 234–271, 314–353, 356–395, and 398–435; these read LRQF…CEIN, VMEAVRDIHFLHSEALLAVAQNRWLYIYDNQGIELHCI, VRAGRLSVMAQNPYNAVIHLGHSNGTVSLWSPAVKEPLAK, CHRGGVRAVAVDSTGTYMATSGLDHQLKIFDLRGTFQPLS, and TLPQGAGHLAFSQRGLLVAGMGDVVNIWAGQGKASPPS. The interval 547–622 is disordered; the sequence is AAFQPKAKQK…AREGGLQVDP (76 aa). Basic and acidic residues predominate over residues 571–582; it reads VMDQEHRDKVRQ.

Part of the small subunit (SSU) processome, composed of more than 70 proteins and the RNA chaperone small nucleolar RNA (snoRNA) U3. Interacts with DDX21, NCL, NOP2 and EBNA1BP2.

The protein resides in the nucleus. Its subcellular location is the nucleolus. Its function is as follows. Scaffold component of the nucleolar structure. Required for localization of DDX21 and NCL to the granular compartment of the nucleolus. Part of the small subunit (SSU) processome, first precursor of the small eukaryotic ribosomal subunit. During the assembly of the SSU processome in the nucleolus, many ribosome biogenesis factors, an RNA chaperone and ribosomal proteins associate with the nascent pre-rRNA and work in concert to generate RNA folding, modifications, rearrangements and cleavage as well as targeted degradation of pre-ribosomal RNA by the RNA exosome. This chain is WD repeat-containing protein 46 (Wdr46), found in Mus musculus (Mouse).